The chain runs to 275 residues: tRNA (guanine-N(7)-)-methyltransferase (275 aa).

Residues 1–73 are disordered; it reads MRHHGRMHAR…GGQQDTWERL (73 aa). Basic residues predominate over residues 46–59; sequence AHRHRRVTSFRSRR. Positions 107, 132, 159, and 182 each coordinate S-adenosyl-L-methionine. Residue Asp182 is part of the active site. Substrate is bound by residues Lys186, Asp218, and 254–257; that span reads TKYE.

This sequence belongs to the class I-like SAM-binding methyltransferase superfamily. TrmB family.

The catalysed reaction is guanosine(46) in tRNA + S-adenosyl-L-methionine = N(7)-methylguanosine(46) in tRNA + S-adenosyl-L-homocysteine. Its pathway is tRNA modification; N(7)-methylguanine-tRNA biosynthesis. Catalyzes the formation of N(7)-methylguanine at position 46 (m7G46) in tRNA. This Mycobacterium sp. (strain KMS) protein is tRNA (guanine-N(7)-)-methyltransferase.